Here is a 1583-residue protein sequence, read N- to C-terminus: Methyl-CpG-binding domain protein 5/6 homolog sba (1583 aa).

A disordered region spans residues 81 to 115; that stretch reads AVHQQQQQHHHQQQQQQQHQQQQQILPAGLVNGNG. The segment covering 83–104 has biased composition (low complexity); it reads HQQQQQHHHQQQQQQQHQQQQQ. In terms of domain architecture, MBD spans 238 to 308; the sequence is RKTATSYNGN…YLFDFNAQVP (71 aa). Disordered stretches follow at residues 427 to 457, 556 to 579, 630 to 694, 839 to 862, 940 to 980, 1179 to 1247, and 1287 to 1339; these read NKLPATNRTATTPTPAPTPPPQHPNGMPTSQ, EPIVHSSQQQQQQQQQQLQQQQQL, VTLV…QTQV, AELHPQPGGGYIVSQPSPVAAASS, PPAQ…ISPQ, VMSR…RSIC, and QESP…SFPL. Residues 430–439 are compositionally biased toward low complexity; sequence PATNRTATTP. Residues 440-449 are compositionally biased toward pro residues; sequence TPAPTPPPQH. A compositionally biased stretch (low complexity) spans 563–579; the sequence is QQQQQQQQQQLQQQQQL. A compositionally biased stretch (polar residues) spans 658–677; sequence AISTSHESPRQSLSSPTDSV. Low complexity-rich tracts occupy residues 679–693 and 851–862; these read SAKSTPSASPKPQTQ and VSQPSPVAAASS. Composition is skewed to polar residues over residues 1179–1195, 1216–1240, and 1287–1313; these read VMSRQGTAASPPDTTTC, CVSSSEPDAAVSPQSTESRQSPSST, and QESPTTTQLLSSVPTAQPTVEKTTVRT. A compositionally biased stretch (low complexity) spans 1323 to 1333; that stretch reads RGAARAAPSAS. The PWWP domain maps to 1346–1408; that stretch reads IGELIWGPAR…VNSLQSLSEG (63 aa). The stretch at 1415–1446 forms a coiled coil; the sequence is AQKDTRKSRKLNSQLERAIQEAMTELDNISAS. The interval 1471 to 1497 is disordered; that stretch reads IGGQQQYQQQQQQQQQQQSPSSTNNKI. Over residues 1474 to 1488 the composition is skewed to low complexity; it reads QQQYQQQQQQQQQQQ.

In terms of assembly, component of the polycomb repressive deubiquitinase (PR-DUB) complex, at least composed of caly/calypso, Asx and sba (MDB5/6 homolog). Interacts (via MBD domain) with Asx (via PHD domain); the interaction is important for the stability of the PR-DUB complex.

In terms of biological role, non-catalytic component of the polycomb repressive deubiquitinase (PR-DUB) complex, a complex that specifically mediates deubiquitination of histone H2A monoubiquitinated at 'Lys-119' (H2AK118ub1). Important for maintaining stability of the PR-DUB complex. Probable epigenetic regulator involved in developmental pattern formation and eye development. The protein is Methyl-CpG-binding domain protein 5/6 homolog sba of Drosophila melanogaster (Fruit fly).